We begin with the raw amino-acid sequence, 174 residues long: FMN-dependent NADPH-azoreductase (174 aa).

Residues 9–11, 15–16, 73–76, and glycine 106 each bind FMN; these read TPR, RT, and EYHS.

It belongs to the azoreductase type 2 family. Homotetramer. FMN is required as a cofactor.

Catalyzes the reductive cleavage of azo bond in aromatic azo compounds to the corresponding amines. Requires NADPH, but not NADH, as an electron donor for its activity. The sequence is that of FMN-dependent NADPH-azoreductase (azr) from Bacillus subtilis (strain 168).